Consider the following 104-residue polypeptide: DNA-directed RNA polymerase subunit omega (104 aa).

The disordered stretch occupies residues 60–104 (VIHPDPEGKREAVRRRAEEERLRKEEEERKIKEQIAKEKEEGEKI). The segment covering 63 to 104 (PDPEGKREAVRRRAEEERLRKEEEERKIKEQIAKEKEEGEKI) has biased composition (basic and acidic residues).

It belongs to the RNA polymerase subunit omega family. As to quaternary structure, the RNAP catalytic core consists of 2 alpha, 1 beta, 1 beta' and 1 omega subunit. When a sigma factor is associated with the core the holoenzyme is formed, which can initiate transcription.

The enzyme catalyses RNA(n) + a ribonucleoside 5'-triphosphate = RNA(n+1) + diphosphate. Functionally, promotes RNA polymerase assembly. Latches the N- and C-terminal regions of the beta' subunit thereby facilitating its interaction with the beta and alpha subunits. The sequence is that of DNA-directed RNA polymerase subunit omega from Streptococcus sanguinis (strain SK36).